A 372-amino-acid chain; its full sequence is THAP domain-containing protein 5 (372 aa).

The segment at 1–85 (MTRYCAATRC…LKPNAIPTLF (85 aa)) adopts a THAP-type zinc-finger fold. A coiled-coil region spans residues 306–362 (TDRHYLRQKIAKLQSKIAVLEAQENATLSRLRLLESVIAKLKQENLLSDEKLKILEN).

The protein localises to the nucleus. The sequence is that of THAP domain-containing protein 5 (thap5) from Xenopus laevis (African clawed frog).